Reading from the N-terminus, the 981-residue chain is NAD(+) hydrolase tir-1 (981 aa).

Disordered stretches follow at residues 1–31, 74–128, and 173–225; these read MLPN…RSLK, QNEQ…PTQP, and LSTP…PVDQ. Polar residues-rich tracts occupy residues 12–23 and 74–85; these read PSFQSLNNNNQR and QNEQDGETTSTD. The span at 87 to 97 shows a compositional bias: acidic residues; it reads AFFELDDDDDL. A compositionally biased stretch (low complexity) spans 98–114; sequence SSPSVPGSPVDPPSISV. Residues 115-128 are compositionally biased toward pro residues; it reads PLPPKSAPPCPTQP. Over residues 182–200 the composition is skewed to basic and acidic residues; that stretch reads EEMHNGQVRKESEYRRFKS. SAM domains follow at residues 614 to 678 and 684 to 750; these read WTCA…LKVA and VDES…AKHP. Residues 760-857 form the TIR domain; it reads KQIDVFISYR…EHQKNIIPIF (98 aa). 769-770 serves as a coordination point for NAD(+); it reads RR. Glutamate 842 is a catalytic residue. Composition is skewed to polar residues over residues 908–939, 954–963, and 972–981; these read TTPT…TGPS, FTPTGSQERA, and PSASTTSDRN. A disordered region spans residues 908–981; it reads TTPTTKEMPS…PSASTTSDRN (74 aa).

This sequence belongs to the SARM1 family. Homodimer. Interacts with rab-1, pal-1 and unc-43. In terms of tissue distribution, highly expressed in hypodermis. Localizes to postsynaptic regions of axons.

Its subcellular location is the cytoplasm. The catalysed reaction is NAD(+) + H2O = ADP-D-ribose + nicotinamide + H(+). Functionally, NAD(+) hydrolase, which plays a key role in non-apoptotic cell death by regulating NAD(+) metabolism. In response to stress, homooligomerizes and catalyzes cleavage of NAD(+) into ADP-D-ribose (ADPR) and nicotinamide; NAD(+) cleavage promoting non-apoptotic neuronal cell death. In males, involved in non-apoptotic death of the linker cell which guides gonad elongation during larval development. Required for both innate immune response and specification of AWC(OFF) neuron. During late embryogenesis, it acts downstream of CAMKII (unc-43) to regulate specification of asymmetric odorant receptors in AWC(OFF) neuron via the nsy-1/ASK1 pmk-1/p38 MAP kinase signaling cascade. Required to localize nsy-1 to postsynaptic regions of AWC neuron, suggesting that it may act by assembling a signaling complex that regulate odorant receptor expression. Also plays a central role in resistance to infection to a broad range of bacterial and fungi pathogens, possibly by activating pmk-1, independently of the NF-kappa-B pathway. Required for expression of antimicrobial peptides nlp-29 and nlp-31. Its role in immune response and neuron specification may be mediated by the same nsy-1/ASK1 pmk-1/p38 MAP kinase cascade signaling pathway. Involved in the response to anoxic conditions probably by activating the p38 pathway composed of nsy-1/sek-1/pmk-1. Involved in regulation of the serotonergic response of ADF neurons to pathogenic food. In addition, plays a role in the up-regulation of gcs-1 upon arsenite treatment, most likely through activation of pmk-1, to confer protection against toxicity induced by heavy metals. In terms of biological role, regulates expression of antimicrobial peptide nlp-29 in response to fungal infection or physical injury. The polypeptide is NAD(+) hydrolase tir-1 (Caenorhabditis elegans).